We begin with the raw amino-acid sequence, 669 residues long: PDF receptor (669 aa).

The Extracellular segment spans residues 1–244 (MTLLSNILDC…DIARRTRTLE (244 aa)). Residues 24–52 (RQSGSSGPSPSAPTAGTFESKSMLEPTSS) form a disordered region. Over residues 26 to 40 (SGSSGPSPSAPTAGT) the composition is skewed to low complexity. Asparagine 111, asparagine 117, asparagine 130, asparagine 137, asparagine 148, and asparagine 198 each carry an N-linked (GlcNAc...) asparagine glycan. Residues 245–265 (IVGLCLSLFALIVSLLIFCTF) form a helical membrane-spanning segment. Topologically, residues 266-274 (RSLRNNRTK) are cytoplasmic. Residues 275–295 (IHKNLFVAMVLQVIIRLTLYL) traverse the membrane as a helical segment. The Extracellular portion of the chain corresponds to 296 to 334 (DQFRRGNKEAATNTSLSVIENTPYLCEASYVLLEYARTA). A glycan (N-linked (GlcNAc...) asparagine) is linked at asparagine 308. Residues 335–355 (MFMWMFIEGLYLHNMVTVAVF) form a helical membrane-spanning segment. Residues 356–366 (QGSFPLKFFSR) are Cytoplasmic-facing. Residues 367–387 (LGWCVPILMTTVWARCTVMYM) traverse the membrane as a helical segment. Topologically, residues 388–411 (DTSLGECLWNYNLTPYYWILEGPR) are extracellular. The chain crosses the membrane as a helical span at residues 412–432 (LAVILLNFCFLVNIIRVLVMK). The Cytoplasmic segment spans residues 433-449 (LRQSQASDIEQTRKAVR). Residues 450–470 (AAIVLLPLLGITNLLHQLAPL) traverse the membrane as a helical segment. The Extracellular portion of the chain corresponds to 471–480 (KTATNFAVWS). The helical transmembrane segment at 481–501 (YGTHFLTSFQGFFIALIYCFL) threads the bilayer. Topologically, residues 502–669 (NGEVRAVLLK…ESVVFELSEQ (168 aa)) are cytoplasmic. Disordered stretches follow at residues 536–573 (AYNTAPDTDAVQPAGDPSATGKRISPPNKRLNGRKPSS) and 590–614 (PRLQNKAREKGKDRVEKTDAEAEPD). Basic and acidic residues predominate over residues 595–609 (KAREKGKDRVEKTDA).

The protein belongs to the G-protein coupled receptor 2 family. Mainly present in clock neurons of the brain. Localizes in all 4 s-LNv neurons, 1 LNd neuron, 7 DN1 neurons, and 1 DN3 neuron. In addition to the clock neurons, it is also present in approximately 13 pairs of neurons along the ventral nerve cord in third instar larvae, which do not overlap with dopaminergic or serotonergic neurons. Not present in DN2 neurons (at protein level).

The protein resides in the cell membrane. Receptor for PDF, a neuropeptide controlling circadian behavioral rhythms. Probably regulates circadian behavioral rhythms through coordination of activities of clock neurons. PDF-binding results in the elevation of cAMP synthesis. Plays a role in sleep regulation and regulates the state transition from sleep to wake. The sequence is that of PDF receptor from Drosophila melanogaster (Fruit fly).